The following is a 553-amino-acid chain: Putative transport protein ASA_0825 (553 aa).

5 helical membrane-spanning segments follow: residues 4 to 24 (IALS…LGNW), 29 to 49 (VGLG…FAGV), 65 to 85 (FGLI…FFSS), 95 to 115 (GFAA…HQLF), and 158 to 178 (MGYA…MWLV). RCK C-terminal domains lie at 191–276 (DLFE…VLGE) and 279–361 (ETSL…VVGN). A run of 6 helical transmembrane segments spans residues 371–391 (MLPV…PFYL), 403–425 (AGGP…LYWF), 439–459 (IVLF…DTLI), 465–485 (AWMM…GVLA), 493–513 (YLTL…LAFA), and 533–553 (LVMF…WAGV).

The protein belongs to the AAE transporter (TC 2.A.81) family. YidE subfamily.

It is found in the cell membrane. The polypeptide is Putative transport protein ASA_0825 (Aeromonas salmonicida (strain A449)).